We begin with the raw amino-acid sequence, 708 residues long: Ion-translocating oxidoreductase complex subunit C (708 aa).

4Fe-4S ferredoxin-type domains lie at 369–397 and 407–436; these read GEPQ…QQLY and KATT…VQYF. Residues cysteine 377, cysteine 380, cysteine 383, cysteine 387, cysteine 416, cysteine 419, cysteine 422, and cysteine 426 each coordinate [4Fe-4S] cluster. Residues 630 to 682 form a disordered region; sequence AKARKLEQQQANAEPEEQIDPRKAAVEAAIARAKARKLEQQQANAEPEEQIDP.

It belongs to the 4Fe4S bacterial-type ferredoxin family. RnfC subfamily. The complex is composed of six subunits: RsxA, RsxB, RsxC, RsxD, RsxE and RsxG. The cofactor is [4Fe-4S] cluster.

Its subcellular location is the cell inner membrane. Its function is as follows. Part of a membrane-bound complex that couples electron transfer with translocation of ions across the membrane. Required to maintain the reduced state of SoxR. The protein is Ion-translocating oxidoreductase complex subunit C of Escherichia coli O1:K1 / APEC.